A 121-amino-acid chain; its full sequence is Large ribosomal subunit protein uL18 (121 aa).

A disordered region spans residues 63 to 88 (AAIRPDPSPKKSQKQPPKTHKRYNLK). Basic residues predominate over residues 73-87 (KSQKQPPKTHKRYNL).

It belongs to the universal ribosomal protein uL18 family. In terms of assembly, component of the large ribosomal subunit (LSU).

Its subcellular location is the cytoplasm. The protein resides in the nucleus. Functionally, component of the ribosome, a large ribonucleoprotein complex responsible for the synthesis of proteins in the cell. The small ribosomal subunit (SSU) binds messenger RNAs (mRNAs) and translates the encoded message by selecting cognate aminoacyl-transfer RNA (tRNA) molecules. The large subunit (LSU) contains the ribosomal catalytic site termed the peptidyl transferase center (PTC), which catalyzes the formation of peptide bonds, thereby polymerizing the amino acids delivered by tRNAs into a polypeptide chain. The nascent polypeptides leave the ribosome through a tunnel in the LSU and interact with protein factors that function in enzymatic processing, targeting, and the membrane insertion of nascent chains at the exit of the ribosomal tunnel. The chain is Large ribosomal subunit protein uL18 (RPL5) from Solanum melongena (Eggplant).